The following is a 542-amino-acid chain: Membrane protein insertase YidC (542 aa).

5 helical membrane passes run 7–27 (LLVM…QQDF), 338–358 (FALL…IIGV), 417–437 (MGGC…YWTF), 455–475 (LSAQ…MFLL), and 494–514 (FMPV…VLYW).

Belongs to the OXA1/ALB3/YidC family. Type 1 subfamily. Interacts with the Sec translocase complex via SecD. Specifically interacts with transmembrane segments of nascent integral membrane proteins during membrane integration.

Its subcellular location is the cell inner membrane. Functionally, required for the insertion and/or proper folding and/or complex formation of integral membrane proteins into the membrane. Involved in integration of membrane proteins that insert both dependently and independently of the Sec translocase complex, as well as at least some lipoproteins. Aids folding of multispanning membrane proteins. The protein is Membrane protein insertase YidC of Actinobacillus pleuropneumoniae serotype 3 (strain JL03).